A 485-amino-acid polypeptide reads, in one-letter code: Polyol:NADP oxidoreductase (485 aa).

The protein belongs to the mannitol dehydrogenase family.

Its subcellular location is the cytoplasm. The sequence is that of Polyol:NADP oxidoreductase (por) from Gluconobacter oxydans (strain 621H) (Gluconobacter suboxydans).